The chain runs to 881 residues: Armadillo repeat-containing protein 3 (881 aa).

ARM repeat units lie at residues 15–54 (DVFDPITIESKKAATVVLMLKSPEEDILAKACEAIYKFAL), 57–96 (EENKATLLELGAVEPLTKLLTHEDKTVRRNAMMIFGILAS), 98–138 (SDVK…NMSV), 140–179 (YTGKVQIFEHGGLEPLIRLLSSSDPDVKKNSIECIYNLVQ), 181–220 (FQCRTTLQELNAIPPILELLRSEYPIIQLLALKTLGVITC), 222–262 (KEAR…NCLE), 264–304 (MDTM…KAAY), 306–345 (PENRKVFHEQEVEKCLVTLLGSDSDGTKIAASQAISALCE), 346–385 (NLSCKEFFNTQGIPQIVQLLRSDNEEVREAAALALANLTT), 388–427 (PANANAAAEADAIDPLINILSSKRDGAIANAATVLTNMAT), 429–468 (EPLRAIIQNHEIMHALLGPLHSTNTLVQSTAALTVAATAC), and 470–509 (VEARTQLRNCGGLVPLVGLLHSKNDEVRRHASWAVMVCAG). S-palmitoyl cysteine attachment occurs at residues cysteine 507 and cysteine 518. The segment at 605 to 659 (NNKSDTSPPPSMEDKSSDVGYGRSISSSSSLRRGSKEKANAIFGSPTEEKSEPAS) is disordered. A compositionally biased stretch (low complexity) spans 622-636 (DVGYGRSISSSSSLR).

As to quaternary structure, homodimer. Interacts with PIK3C3, PIK3R4 and BECN1. Interacts (via ARM domains) with ATG14. In terms of processing, palmitoylation is important for its function in autophagy. Testis-specific.

Essential for male fertility and sperm motility. During spermatogenesis, promotes the autophagic degradation of excessive ribosomes, providing energy resources for mitochondria and thus ensuring sperm flagellar motility. The protein is Armadillo repeat-containing protein 3 (Armc3) of Mus musculus (Mouse).